Reading from the N-terminus, the 208-residue chain is Uracil phosphoribosyltransferase (208 aa).

5-phospho-alpha-D-ribose 1-diphosphate is bound by residues arginine 78, arginine 103, and 130–138; that span reads DPMLATGGT. Uracil contacts are provided by residues isoleucine 193 and 198-200; that span reads GDA. Aspartate 199 is a binding site for 5-phospho-alpha-D-ribose 1-diphosphate.

The protein belongs to the UPRTase family. Mg(2+) is required as a cofactor.

It catalyses the reaction UMP + diphosphate = 5-phospho-alpha-D-ribose 1-diphosphate + uracil. The protein operates within pyrimidine metabolism; UMP biosynthesis via salvage pathway; UMP from uracil: step 1/1. Allosterically activated by GTP. Its function is as follows. Catalyzes the conversion of uracil and 5-phospho-alpha-D-ribose 1-diphosphate (PRPP) to UMP and diphosphate. This Blochmanniella floridana protein is Uracil phosphoribosyltransferase.